The primary structure comprises 497 residues: Probable cytosol aminopeptidase (497 aa).

The Mn(2+) site is built by Lys-267 and Asp-272. Residue Lys-279 is part of the active site. Residues Asp-290, Asp-349, and Glu-351 each contribute to the Mn(2+) site. Arg-353 is an active-site residue.

Belongs to the peptidase M17 family. Mn(2+) serves as cofactor.

Its subcellular location is the cytoplasm. The catalysed reaction is Release of an N-terminal amino acid, Xaa-|-Yaa-, in which Xaa is preferably Leu, but may be other amino acids including Pro although not Arg or Lys, and Yaa may be Pro. Amino acid amides and methyl esters are also readily hydrolyzed, but rates on arylamides are exceedingly low.. It carries out the reaction Release of an N-terminal amino acid, preferentially leucine, but not glutamic or aspartic acids.. Presumably involved in the processing and regular turnover of intracellular proteins. Catalyzes the removal of unsubstituted N-terminal amino acids from various peptides. The sequence is that of Probable cytosol aminopeptidase from Pseudomonas entomophila (strain L48).